A 378-amino-acid polypeptide reads, in one-letter code: Schlafen family member 2 (378 aa).

This sequence belongs to the Schlafen family. As to expression, mainly expressed in the thymus, lymph node and spleen.

The protein localises to the cytoplasm. TRNA-binding protein involved in T-cell mediated immunity. Plays a key role during the metabolic reprograming phase of activated T-cell, when T-cells produce reactive oxygen species (ROS): acts by binding tRNAs and protecting them from cleavage by the oxidative stress-activated ribonuclease angiogenin (ANG). Also required for T-cell quiescence maintenance. The protein is Schlafen family member 2 of Mus musculus (Mouse).